The sequence spans 277 residues: Protein CUSTOS (277 aa).

Disordered stretches follow at residues 1–81, 108–182, and 238–277; these read MVAP…QTTP, TQQA…QRCR, and SVNG…EPKN. Over residues 9 to 18 the composition is skewed to low complexity; sequence SDSESSSSDS. Phosphoserine is present on Ser-62. Residues 63–72 show a composition bias toward basic and acidic residues; it reads RRREVNQHDE. Thr-80 bears the Phosphothreonine mark. Residues 106-141 are a coiled coil; the sequence is KKTQQARLQQEAKEQQEAKEQQAAKEEQAAKKEEDG. Basic and acidic residues predominate over residues 115–142; sequence QEAKEQQEAKEQQAAKEEQAAKKEEDGF. Residues Ser-158 and Ser-238 each carry the phosphoserine modification. Over residues 248-258 the composition is skewed to basic residues; it reads TKKKKKKKAKK. The Nucleolar localization signal (NLS) motif lies at 249–256; it reads KKKKKKKA. Low complexity predominate over residues 265-277; that stretch reads CPPAECAAAEPKN.

Belongs to the CUSTOS family.

The protein localises to the nucleus envelope. Plays a role in the regulation of Wnt signaling pathway during early development. The sequence is that of Protein CUSTOS from Rattus norvegicus (Rat).